Reading from the N-terminus, the 43-residue chain is SPbeta prophage-derived uncharacterized protein YotD (43 aa).

This is SPbeta prophage-derived uncharacterized protein YotD (yotD) from Bacillus subtilis (strain 168).